The chain runs to 693 residues: MFLVFTCSLILLASCSSCQHHTCHCAGRIFICQESKVVQLPRDIPTNATELRFVLTKMRVIPKGAFAGLLDLEKIEISQNDALEVIEAKVFSNLPKLHEIRIEKANNLVYIDQDAFQHLPSLRYLLISNTGLRFLPVVQKVHSFQKVLLDIQDNINIRTIERNSFMGLSSESVILWLNKNGIQEIENHAFNGTYLDELNLSDNQNLEKLPNEVFQGANGPVVLDISRTKISFLPGHGLELIKKLRARSTYNLKKLPDLSKFRSLIEANFTYPSHCCAFTNWKRQNTELHPICSISQAKQDLDEQHGNKIHRRSAAEDYISNYAIGFDPSENEFDYGLCNEVVNVACSPKPDAFNPCEDIMGYTILRVLIWFISILAITGNIVVLIILISSQYKLTVPRFLMCNLAFADLCIGIYLLFIASVDIQTKSQYYNYAIDWQTGAGCNAAGFFTVFASELSVYTLTVITLERWHTITYAMQLDRKVRFRHAVIIMIFGWMFAFTVALLPIFGVSSYMKVSICLPMDIETPFSQAYVIFLLVLNVLAFVIICACYICIYFTVRNPNVISSNSDTKIAKRMAILIFTDFLCMAPISFFAISASLKVPLITVSKSKILLVLFYPINSCANPFLYAIFTKTFRRDFFILLSKFGCCEMQAQIYRTDTSSSAHNFHTRNGHYPPASKNSDGTIYSLVPLNHLN.

The N-terminal stretch at 1–18 (MFLVFTCSLILLASCSSC) is a signal peptide. Cystine bridges form between C18–C25 and C23–C32. Positions 19 to 46 (QHHTCHCAGRIFICQESKVVQLPRDIPT) constitute an LRRNT domain. Over 19-366 (QHHTCHCAGR…EDIMGYTILR (348 aa)) the chain is Extracellular. N47 carries N-linked (GlcNAc...) asparagine glycosylation. LRR repeat units lie at residues 49 to 72 (TELRFVLTKMRVIPKGAFAGLLDL), 73 to 97 (EKIEISQNDALEVIEAKVFSNLPKL), 98 to 118 (HEIRIEKANNLVYIDQDAFQH), 119 to 143 (LPSLRYLLISNTGLRFLPVVQKVHS), 144 to 169 (FQKVLLDIQDNINIRTIERNSFMGLS), 170 to 192 (SESVILWLNKNGIQEIENHAFNG), 193 to 216 (TYLDELNLSDNQNLEKLPNEVFQG), 217 to 240 (ANGPVVLDISRTKISFLPGHGLEL), and 241 to 259 (IKKLRARSTYNLKKLPDLS). N-linked (GlcNAc...) asparagine glycosylation is found at N191 and N199. N-linked (GlcNAc...) asparagine glycosylation is present at N268. Disulfide bonds link C275/C346, C276/C292, C276/C356, and C292/C338. Residues 367 to 387 (VLIWFISILAITGNIVVLIIL) form a helical membrane-spanning segment. Over 388–398 (ISSQYKLTVPR) the chain is Cytoplasmic. A helical membrane pass occupies residues 399–421 (FLMCNLAFADLCIGIYLLFIASV). Residues 422–443 (DIQTKSQYYNYAIDWQTGAGCN) are Extracellular-facing. C442 and C517 are oxidised to a cystine. Residues 444 to 465 (AAGFFTVFASELSVYTLTVITL) traverse the membrane as a helical segment. Topologically, residues 466–485 (ERWHTITYAMQLDRKVRFRH) are cytoplasmic. Residues 486 to 508 (AVIIMIFGWMFAFTVALLPIFGV) traverse the membrane as a helical segment. The Extracellular segment spans residues 509 to 528 (SSYMKVSICLPMDIETPFSQ). The helical transmembrane segment at 529 to 550 (AYVIFLLVLNVLAFVIICACYI) threads the bilayer. Residues 551–573 (CIYFTVRNPNVISSNSDTKIAKR) lie on the Cytoplasmic side of the membrane. A helical membrane pass occupies residues 574-597 (MAILIFTDFLCMAPISFFAISASL). Topologically, residues 598–608 (KVPLITVSKSK) are extracellular. A helical transmembrane segment spans residues 609 to 630 (ILLVLFYPINSCANPFLYAIFT). The Cytoplasmic segment spans residues 631–693 (KTFRRDFFIL…YSLVPLNHLN (63 aa)).

Belongs to the G-protein coupled receptor 1 family. FSH/LSH/TSH subfamily. Homotrimer. Functions as a homotrimer binding the FSH hormone heterodimer composed of CGA and FSHB.

It localises to the cell membrane. In terms of biological role, g protein-coupled receptor for follitropin, the follicle-stimulating hormone. Through cAMP production activates the downstream PI3K-AKT and ERK1/ERK2 signaling pathways. The chain is Follicle-stimulating hormone receptor (FSHR) from Cairina moschata (Muscovy duck).